We begin with the raw amino-acid sequence, 1275 residues long: Probable Rho-type GTPase-activating protein 2 (1275 aa).

Disordered regions lie at residues 118 to 146 (KYES…SPYE), 213 to 238 (NTKR…LKDS), 280 to 306 (SSFR…KDNN), and 335 to 365 (SSPR…SKSG). The span at 122–143 (TDSFPSSQPSRANSPQSDSYSS) shows a compositional bias: polar residues. Polar residues-rich tracts occupy residues 290 to 299 (TPFNSDSNIS) and 353 to 364 (PKHSTNNLSSKS). Phosphoserine is present on Ser388. Disordered regions lie at residues 390-466 (IIEN…RSSF) and 539-561 (FSKS…SNSK). Polar residues-rich tracts occupy residues 450–466 (SLSL…RSSF) and 552–561 (QVEKSTSNSK). One can recognise a PH domain in the interval 719–836 (HAQKEGVLLK…WLRAILRQVP (118 aa)). The segment covering 957–971 (ADTRRNQDAPEKHVP) has biased composition (basic and acidic residues). Disordered stretches follow at residues 957–988 (ADTR…TDQS) and 1254–1275 (NGAQ…NEFF). The 211-residue stretch at 1065–1275 (LPLNEAVNIS…DDNGEDNEFF (211 aa)) folds into the Rho-GAP domain. A compositionally biased stretch (acidic residues) spans 1260-1275 (SDSDVSDDNGEDNEFF).

It localises to the nucleus. In terms of biological role, GTPase-activating protein for Rho-type proteins. In Schizosaccharomyces pombe (strain 972 / ATCC 24843) (Fission yeast), this protein is Probable Rho-type GTPase-activating protein 2 (rga2).